The following is a 244-amino-acid chain: Adenosylcobinamide-GDP ribazoletransferase (244 aa).

Transmembrane regions (helical) follow at residues 31–51 (LLCYPLVGLLFGLLLWLASHL), 55–75 (APAPLHAALLLTLWVLLSGAL), 109–129 (IAVVTLVLVLLLKFCALWVLV), 133–153 (AGALLVLAPVVGRAAMLGLFL), and 188–208 (LLLGGWSAIWPMALALGVFLW).

It belongs to the CobS family. Mg(2+) is required as a cofactor.

The protein resides in the cell inner membrane. It catalyses the reaction alpha-ribazole + adenosylcob(III)inamide-GDP = adenosylcob(III)alamin + GMP + H(+). The catalysed reaction is alpha-ribazole 5'-phosphate + adenosylcob(III)inamide-GDP = adenosylcob(III)alamin 5'-phosphate + GMP + H(+). It participates in cofactor biosynthesis; adenosylcobalamin biosynthesis; adenosylcobalamin from cob(II)yrinate a,c-diamide: step 7/7. Functionally, joins adenosylcobinamide-GDP and alpha-ribazole to generate adenosylcobalamin (Ado-cobalamin). Also synthesizes adenosylcobalamin 5'-phosphate from adenosylcobinamide-GDP and alpha-ribazole 5'-phosphate. The polypeptide is Adenosylcobinamide-GDP ribazoletransferase (Pseudomonas putida (strain W619)).